A 40-amino-acid polypeptide reads, in one-letter code: uncharacterized protein (40 aa).

Polar residues predominate over residues 1–14; the sequence is MNRMLSLSVQSQRA. A disordered region spans residues 1 to 25; that stretch reads MNRMLSLSVQSQRAPASPSPYGLKI.

This is an uncharacterized protein from Treponema pallidum (strain Nichols).